The following is a 181-amino-acid chain: GTP cyclohydrolase 1 2 (181 aa).

It belongs to the GTP cyclohydrolase I family. As to quaternary structure, homomer.

The catalysed reaction is GTP + H2O = 7,8-dihydroneopterin 3'-triphosphate + formate + H(+). The protein operates within cofactor biosynthesis; 7,8-dihydroneopterin triphosphate biosynthesis; 7,8-dihydroneopterin triphosphate from GTP: step 1/1. This is GTP cyclohydrolase 1 2 from Pseudomonas syringae pv. tomato (strain ATCC BAA-871 / DC3000).